Here is a 185-residue protein sequence, read N- to C-terminus: Elongation factor P (185 aa).

It belongs to the elongation factor P family.

The protein resides in the cytoplasm. It participates in protein biosynthesis; polypeptide chain elongation. Its function is as follows. Involved in peptide bond synthesis. Stimulates efficient translation and peptide-bond synthesis on native or reconstituted 70S ribosomes in vitro. Probably functions indirectly by altering the affinity of the ribosome for aminoacyl-tRNA, thus increasing their reactivity as acceptors for peptidyl transferase. This chain is Elongation factor P, found in Kosmotoga olearia (strain ATCC BAA-1733 / DSM 21960 / TBF 19.5.1).